A 453-amino-acid chain; its full sequence is Carbamoyl phosphate synthase arginine-specific small chain (453 aa).

The transit peptide at 1–28 (MFARVFKAMPARASALTSVNASIPARFM) directs the protein to the mitochondrion. The Glutamine amidotransferase type-1 domain occupies 219–406 (HVAVIDCGVK…IDSVKKYKAS (188 aa)). The active-site Nucleophile is the cysteine 295. Residues histidine 379 and glutamate 381 contribute to the active site.

The protein belongs to the CarA family. As to quaternary structure, heterodimer composed of 2 chains; the small (or glutamine) chain promotes the hydrolysis of glutamine to ammonia, which is used by the large (or ammonia) chain to synthesize carbamoyl phosphate.

It localises to the mitochondrion matrix. The catalysed reaction is hydrogencarbonate + L-glutamine + 2 ATP + H2O = carbamoyl phosphate + L-glutamate + 2 ADP + phosphate + 2 H(+). It catalyses the reaction L-glutamine + H2O = L-glutamate + NH4(+). The protein operates within amino-acid biosynthesis; L-arginine biosynthesis; carbamoyl phosphate from bicarbonate: step 1/1. Its function is as follows. Small subunit of the arginine-specific carbamoyl phosphate synthase (CPSase). CPSase catalyzes the formation of carbamoyl phosphate from the ammonia moiety of glutamine, carbonate, and phosphate donated by ATP, the first step of the arginine biosynthetic pathway. The small subunit (glutamine amidotransferase) binds and cleaves glutamine to supply the large subunit with the substrate ammonia. This chain is Carbamoyl phosphate synthase arginine-specific small chain (cpa1), found in Aspergillus fumigatus (strain ATCC MYA-4609 / CBS 101355 / FGSC A1100 / Af293) (Neosartorya fumigata).